The following is a 369-amino-acid chain: Anthranilate phosphoribosyltransferase (369 aa).

5-phospho-alpha-D-ribose 1-diphosphate-binding positions include Gly-85, 88–89, Thr-93, 95–98, 113–121, and Ser-125; these read GD, NLST, and KHGNRAASS. Anthranilate is bound at residue Gly-85. Ser-97 is a binding site for Mg(2+). Anthranilate is bound at residue Asn-116. Arg-171 contacts anthranilate. Residues Asp-229 and Glu-230 each coordinate Mg(2+).

This sequence belongs to the anthranilate phosphoribosyltransferase family. As to quaternary structure, homodimer. It depends on Mg(2+) as a cofactor.

The enzyme catalyses N-(5-phospho-beta-D-ribosyl)anthranilate + diphosphate = 5-phospho-alpha-D-ribose 1-diphosphate + anthranilate. The protein operates within amino-acid biosynthesis; L-tryptophan biosynthesis; L-tryptophan from chorismate: step 2/5. Functionally, catalyzes the transfer of the phosphoribosyl group of 5-phosphorylribose-1-pyrophosphate (PRPP) to anthranilate to yield N-(5'-phosphoribosyl)-anthranilate (PRA). The chain is Anthranilate phosphoribosyltransferase from Frankia alni (strain DSM 45986 / CECT 9034 / ACN14a).